The following is a 337-amino-acid chain: Vacuolar protein sorting-associated protein 26B (337 aa).

The interval 311-337 (SQRFEGTSHPETRPQHSGAAAVEQEQE) is disordered.

The protein belongs to the VPS26 family. As to quaternary structure, component of the heterotrimeric retromer cargo-selective complex (CSC) which is believed to associate with variable sorting nexins to form functionally distinct retromer complex variants.

Its subcellular location is the cytoplasm. The protein resides in the membrane. It is found in the endosome. In terms of biological role, acts as a component of the retromer cargo-selective complex (CSC). The CSC is believed to be the core functional component of retromer or respective retromer complex variants acting to prevent missorting of selected transmembrane cargo proteins into the lysosomal degradation pathway. Retromer mediates retrograde transport of cargo proteins from endosomes to the trans-Golgi network (TGN). This chain is Vacuolar protein sorting-associated protein 26B (vps26b), found in Xenopus tropicalis (Western clawed frog).